The sequence spans 615 residues: Dihydroxy-acid dehydratase (615 aa).

Asp-81 provides a ligand contact to Mg(2+). Residue Cys-122 coordinates [2Fe-2S] cluster. Mg(2+)-binding residues include Asp-123 and Lys-124. At Lys-124 the chain carries N6-carboxylysine. Cys-197 provides a ligand contact to [2Fe-2S] cluster. Residue Glu-494 participates in Mg(2+) binding. Ser-520 (proton acceptor) is an active-site residue.

Belongs to the IlvD/Edd family. Homodimer. It depends on [2Fe-2S] cluster as a cofactor. Requires Mg(2+) as cofactor.

It carries out the reaction (2R)-2,3-dihydroxy-3-methylbutanoate = 3-methyl-2-oxobutanoate + H2O. It catalyses the reaction (2R,3R)-2,3-dihydroxy-3-methylpentanoate = (S)-3-methyl-2-oxopentanoate + H2O. It functions in the pathway amino-acid biosynthesis; L-isoleucine biosynthesis; L-isoleucine from 2-oxobutanoate: step 3/4. Its pathway is amino-acid biosynthesis; L-valine biosynthesis; L-valine from pyruvate: step 3/4. In terms of biological role, functions in the biosynthesis of branched-chain amino acids. Catalyzes the dehydration of (2R,3R)-2,3-dihydroxy-3-methylpentanoate (2,3-dihydroxy-3-methylvalerate) into 2-oxo-3-methylpentanoate (2-oxo-3-methylvalerate) and of (2R)-2,3-dihydroxy-3-methylbutanoate (2,3-dihydroxyisovalerate) into 2-oxo-3-methylbutanoate (2-oxoisovalerate), the penultimate precursor to L-isoleucine and L-valine, respectively. This is Dihydroxy-acid dehydratase from Salinispora arenicola (strain CNS-205).